The primary structure comprises 86 residues: Small ribosomal subunit protein bS16 (86 aa).

It belongs to the bacterial ribosomal protein bS16 family.

This chain is Small ribosomal subunit protein bS16, found in Carboxydothermus hydrogenoformans (strain ATCC BAA-161 / DSM 6008 / Z-2901).